Here is a 486-residue protein sequence, read N- to C-terminus: Cysteine--tRNA ligase (486 aa).

A Zn(2+)-binding site is contributed by C27. The short motif at 29-39 (PTTYNFIHLGN) is the 'HIGH' region element. C207, H232, and E236 together coordinate Zn(2+). A 'KMSKS' region motif is present at residues 264–268 (KMSKS). Residue K267 coordinates ATP.

Belongs to the class-I aminoacyl-tRNA synthetase family. In terms of assembly, monomer. Requires Zn(2+) as cofactor.

Its subcellular location is the cytoplasm. The catalysed reaction is tRNA(Cys) + L-cysteine + ATP = L-cysteinyl-tRNA(Cys) + AMP + diphosphate. This chain is Cysteine--tRNA ligase, found in Desulforamulus reducens (strain ATCC BAA-1160 / DSM 100696 / MI-1) (Desulfotomaculum reducens).